A 668-amino-acid polypeptide reads, in one-letter code: MASEKSTSKGQAWFCTTGLPSDIEIEVDDMTFHLHKFPLMSKSRKLHRLITEQETRSSSSMALITVIDPKVEETDKKGKGHEIEDDKEEEEVEEQEIEENGYPHIKLEDFPGSSESFEMVAKFCYGVKMDLSASTVVPLRCAAEHLEMTEEYSPDNLISKTERFLSHSVYKSLRESIKALKACESVSPLAGSLGITEQCIDSIVSRASSADPSLFGWPVNDGGGRGNISATDLQLIPGGAAKSRKKPSRDSNMELWFEDLTQLSLPIFKTVILSMRSGDLSSDIIESCLICYAKKHIPGILRSNRKPPSSSSTAVSENEQRELLETITSNLPLDKSSISSTTRFLFGLLRTAIILNAAEICRDLLERKIGSQLERATLDDLLVPSYSYLNETLYDVDLVERILGHFLDTLEQSNTAIVEVDGKSPSLMLVGKLIDGFLAEIASDANLKSDKFYNLAISLPDQARLYDDGLYRAVDVYLKAHPWVSEAEREKICGVMDCQKLTLEACTHAAQNERLPLRAVVQVLFFEQLQLRHAIAGTLLAAQSPSTSQSTEPRPSAAIRNLTITEEDGDEAEGERQVDAGKWKKTVRENQVLRLDMDTMRTRVHRLERECSNMKKVIAKIDKEGSSPATTTDRPRSWSITKKFGCKFKTQVCDSHEATMVDHRSRRS.

Residues 21–133 (SDIEIEVDDM…CYGVKMDLSA (113 aa)) form the BTB domain. Over residues 73 to 84 (ETDKKGKGHEIE) the composition is skewed to basic and acidic residues. Positions 73–98 (ETDKKGKGHEIEDDKEEEEVEEQEIE) are disordered. The span at 85-98 (DDKEEEEVEEQEIE) shows a compositional bias: acidic residues. One can recognise an NPH3 domain in the interval 254–530 (ELWFEDLTQL…VQVLFFEQLQ (277 aa)). Tyrosine 471 carries the post-translational modification Phosphotyrosine.

It belongs to the NPH3 family.

The protein operates within protein modification; protein ubiquitination. In terms of biological role, may act as a substrate-specific adapter of an E3 ubiquitin-protein ligase complex (CUL3-RBX1-BTB) which mediates the ubiquitination and subsequent proteasomal degradation of target proteins. This Arabidopsis thaliana (Mouse-ear cress) protein is BTB/POZ domain-containing protein At5g66560.